The following is a 210-amino-acid chain: MRKERLIESLRNYVSERVVEAMSRVPRELFVPEELRPMAYEDRPLPIGHGQTISAPHMVAMMCDLLDLREGMKVLEVGGGCGYHAAVMAELVGPSGHVYSVERIPELVEMARRNLERARYRNVSMILGDGTLGYSEQAPYDRISVAASAPDIPEPLKEQLRPGGRMVIPVGSYSQDLLVVTKNHDIRVERAMGVIFVPLIGKYGFKDSFW.

S54 is a catalytic residue.

This sequence belongs to the methyltransferase superfamily. L-isoaspartyl/D-aspartyl protein methyltransferase family.

It localises to the cytoplasm. The enzyme catalyses [protein]-L-isoaspartate + S-adenosyl-L-methionine = [protein]-L-isoaspartate alpha-methyl ester + S-adenosyl-L-homocysteine. Its function is as follows. Catalyzes the methyl esterification of L-isoaspartyl residues in peptides and proteins that result from spontaneous decomposition of normal L-aspartyl and L-asparaginyl residues. It plays a role in the repair and/or degradation of damaged proteins. The polypeptide is Protein-L-isoaspartate O-methyltransferase (Methanothrix thermoacetophila (strain DSM 6194 / JCM 14653 / NBRC 101360 / PT) (Methanosaeta thermophila)).